The chain runs to 83 residues: Gene 41 protein (83 aa).

The chain is Gene 41 protein (41) from Mycobacterium phage L5 (Mycobacteriophage L5).